A 572-amino-acid polypeptide reads, in one-letter code: MERHLITSAIPYINGIKHLGNLVGSQLPADLYARYLRARGHEVLFLCATDEHGTPAELAAAKAGKPVDEYCAEMHAIQSEIAKGFRLSFDHFGRSSSAQNHRLTQHFAGKLDEANLIDEVIEKQVYSHADGRFLPDRYIEGTCPNCAYDKARGDQCENCTKQLDPTDLIEPRSAISGSTDLEVRETKHLYLKQSVLKDQLDAWIDSKTDWPVLTTSIAKKWLHDGDGLRDRGITRDLDWGIPVKKGTQDWPGMEGKVFYVWFDAPIEYIACASEWAEANNLEQSDWERWWRTDKGADDVRYTQFMGKDNVPFHTLSFPATLLGSGEPWKMVDHLKSFNYLNYDGGQFSTSQGRGIFMDQALELLPADYWRWWLLSHAPENSDSEFTWENFQSSVNKDLADVLGNFVSRITKFCAAKFGSEVPAGGAYGSAELELLTKLDESLTRYQDYMGAMEVRKSAQELRAIWASGNEYLQTVAPWSVFKTDPETAAMQTRLGLNLALLFGVLSSPFVPDASEKILKCLGHPSARWPDTCTDFVTSMKPGDPFEVPEVLFAKLTDEDRATYSAKFSGTQS.

The 'HIGH' region signature appears at 11-21 (PYINGIKHLGN). Zn(2+) is bound by residues C143, C146, C156, and C159. The short motif at 346–350 (QFSTS) is the 'KMSKS' region element. T349 is an ATP binding site.

This sequence belongs to the class-I aminoacyl-tRNA synthetase family. MetG type 1 subfamily. Monomer. The cofactor is Zn(2+).

It localises to the cytoplasm. It catalyses the reaction tRNA(Met) + L-methionine + ATP = L-methionyl-tRNA(Met) + AMP + diphosphate. Its function is as follows. Is required not only for elongation of protein synthesis but also for the initiation of all mRNA translation through initiator tRNA(fMet) aminoacylation. The protein is Methionine--tRNA ligase of Roseobacter denitrificans (strain ATCC 33942 / OCh 114) (Erythrobacter sp. (strain OCh 114)).